We begin with the raw amino-acid sequence, 541 residues long: Thioredoxin reductase (541 aa).

Residues 51 to 52 (PG), 71 to 74 (DYVK), 87 to 88 (TC), 92 to 96 (GCVPK), Ala-161, Asp-357, and 364 to 366 (ELA) each bind FAD. Cys-88 and Cys-93 are disulfide-bonded. Residues 438–452 (HRQKHIRAQKDEYDL) are loop important for the interaction with TRX1. His-509 contacts FAD. His-509 serves as the catalytic Proton acceptor. Cys-535 and Cys-540 are joined by a disulfide.

It belongs to the class-I pyridine nucleotide-disulfide oxidoreductase family. In terms of assembly, homodimer. Requires FAD as cofactor.

The protein localises to the cytoplasm. It carries out the reaction [thioredoxin]-dithiol + NADP(+) = [thioredoxin]-disulfide + NADPH + H(+). Functionally, catalyzes the transfer of electrons from NADPH to thioredoxins TRX1, TRX2 and TRX3, which in turn act as reductants of disulfide containing proteins. Able to reduce nitroglutathione (GSNO), a compound involved in the transport of nitric oxide (NO); however, TRX1 is more efficient in reducing GSNO. Has no catalytic activity towards oxidized glutathione (GSSG). The sequence is that of Thioredoxin reductase from Plasmodium falciparum (isolate FCH-5).